We begin with the raw amino-acid sequence, 199 residues long: Imidazoleglycerol-phosphate dehydratase (199 aa).

Belongs to the imidazoleglycerol-phosphate dehydratase family.

The protein localises to the cytoplasm. The enzyme catalyses D-erythro-1-(imidazol-4-yl)glycerol 3-phosphate = 3-(imidazol-4-yl)-2-oxopropyl phosphate + H2O. Its pathway is amino-acid biosynthesis; L-histidine biosynthesis; L-histidine from 5-phospho-alpha-D-ribose 1-diphosphate: step 6/9. The polypeptide is Imidazoleglycerol-phosphate dehydratase (Bifidobacterium longum (strain NCC 2705)).